Consider the following 255-residue polypeptide: 2-succinyl-6-hydroxy-2,4-cyclohexadiene-1-carboxylate synthase (255 aa).

The protein belongs to the AB hydrolase superfamily. MenH family. In terms of assembly, monomer.

The catalysed reaction is 5-enolpyruvoyl-6-hydroxy-2-succinyl-cyclohex-3-ene-1-carboxylate = (1R,6R)-6-hydroxy-2-succinyl-cyclohexa-2,4-diene-1-carboxylate + pyruvate. It participates in quinol/quinone metabolism; 1,4-dihydroxy-2-naphthoate biosynthesis; 1,4-dihydroxy-2-naphthoate from chorismate: step 3/7. Its pathway is quinol/quinone metabolism; menaquinone biosynthesis. In terms of biological role, catalyzes a proton abstraction reaction that results in 2,5-elimination of pyruvate from 2-succinyl-5-enolpyruvyl-6-hydroxy-3-cyclohexene-1-carboxylate (SEPHCHC) and the formation of 2-succinyl-6-hydroxy-2,4-cyclohexadiene-1-carboxylate (SHCHC). The sequence is that of 2-succinyl-6-hydroxy-2,4-cyclohexadiene-1-carboxylate synthase from Serratia proteamaculans (strain 568).